The chain runs to 126 residues: Large ribosomal subunit protein mL55 (126 aa).

A mitochondrion-targeting transit peptide spans 1–34 (MSAKGSLLRLLWQCGMTRAAPESCRYLYTSSWRA). At Ser-86 the chain carries Phosphoserine.

The protein belongs to the mitochondrion-specific ribosomal protein mL55 family. Component of the mitochondrial ribosome large subunit (39S) which comprises a 16S rRNA and about 50 distinct proteins.

The protein resides in the mitochondrion. In Bos taurus (Bovine), this protein is Large ribosomal subunit protein mL55 (MRPL55).